The sequence spans 219 residues: Large ribosomal subunit protein bL25 (219 aa).

Positions 193 to 219 (VSSTELEETPEVPASAVPTTDQGESAE) are disordered. Positions 209 to 219 (VPTTDQGESAE) are enriched in polar residues.

It belongs to the bacterial ribosomal protein bL25 family. CTC subfamily. In terms of assembly, part of the 50S ribosomal subunit; part of the 5S rRNA/L5/L18/L25 subcomplex. Contacts the 5S rRNA. Binds to the 5S rRNA independently of L5 and L18.

In terms of biological role, this is one of the proteins that binds to the 5S RNA in the ribosome where it forms part of the central protuberance. The polypeptide is Large ribosomal subunit protein bL25 (Legionella pneumophila (strain Corby)).